The following is a 668-amino-acid chain: Tastin (668 aa).

Disordered stretches follow at residues 1–102, 154–177, and 189–285; these read MTTL…GGSN, ERKG…PRIP, and FSRL…GRHH. Ser16 is modified (phosphoserine). Polar residues-rich tracts occupy residues 27 to 37 and 55 to 64; these read QRCQDFSSVKS and PRSTQRQRPL. Ser97 is modified (phosphoserine). Positions 158 to 168 are enriched in polar residues; that stretch reads GTTQRGQSARS. Ser169 carries the phosphoserine modification. Composition is skewed to basic and acidic residues over residues 227–246 and 269–282; these read ELRR…DRRT and GEQE…DGGG. 3 positions are modified to phosphoserine: Ser306, Ser324, and Ser338. 2 disordered regions span residues 364-392 and 462-502; these read ITLQ…HQEL and TEPL…AEPE.

Directly binds bystin, and indirectly trophinin.

Its subcellular location is the cytoplasm. In terms of biological role, could be involved with bystin and trophinin in a cell adhesion molecule complex that mediates an initial attachment of the blastocyst to uterine epithelial cells at the time of the embryo implantation. The polypeptide is Tastin (Mus musculus (Mouse)).